Reading from the N-terminus, the 348-residue chain is MSETTDYGASNTGANEESLRMVSSQPIGNEPVSDEELRPHVLGGFIGQPRLKAQLQLFLDAARKRDVPPDHILLAGPPGLGKTTLAMIVANELEVPIRVTSGPAVQHAGDLASILSSLDVGEVLFIDEIHRLPRAAEELLYIAMEDFRVDVMVGKGPGASSIPLTLPRFTVIGATTREGMLPSPLRARFGFTAHLDFYPHEELEKLIERSANVLGVNLDTGSAHELALRSRGTPRIANRLLRRVRDWAIVHDLIVVRPDDVKEALALYQIDSEGLDRLDIAVLNAIVRNFNGGPVGLNNLAAMVGEESETVETVCEPYLVREGFMIRTPKGRVATELADIIFGNYAQR.

A large ATPase domain (RuvB-L) region spans residues 4–198; the sequence is TTDYGASNTG…FGFTAHLDFY (195 aa). ATP contacts are provided by residues leucine 37, arginine 38, glycine 79, lysine 82, threonine 83, threonine 84, 145–147, arginine 188, tyrosine 198, and arginine 235; that span reads EDF. Residue threonine 83 coordinates Mg(2+). Residues 199–269 form a small ATPAse domain (RuvB-S) region; the sequence is PHEELEKLIE…DVKEALALYQ (71 aa). Residues 272–348 form a head domain (RuvB-H) region; that stretch reads SEGLDRLDIA…DIIFGNYAQR (77 aa). Residues arginine 327 and arginine 332 each contribute to the DNA site.

Belongs to the RuvB family. Homohexamer. Forms an RuvA(8)-RuvB(12)-Holliday junction (HJ) complex. HJ DNA is sandwiched between 2 RuvA tetramers; dsDNA enters through RuvA and exits via RuvB. An RuvB hexamer assembles on each DNA strand where it exits the tetramer. Each RuvB hexamer is contacted by two RuvA subunits (via domain III) on 2 adjacent RuvB subunits; this complex drives branch migration. In the full resolvosome a probable DNA-RuvA(4)-RuvB(12)-RuvC(2) complex forms which resolves the HJ.

Its subcellular location is the cytoplasm. The catalysed reaction is ATP + H2O = ADP + phosphate + H(+). Its function is as follows. The RuvA-RuvB-RuvC complex processes Holliday junction (HJ) DNA during genetic recombination and DNA repair, while the RuvA-RuvB complex plays an important role in the rescue of blocked DNA replication forks via replication fork reversal (RFR). RuvA specifically binds to HJ cruciform DNA, conferring on it an open structure. The RuvB hexamer acts as an ATP-dependent pump, pulling dsDNA into and through the RuvAB complex. RuvB forms 2 homohexamers on either side of HJ DNA bound by 1 or 2 RuvA tetramers; 4 subunits per hexamer contact DNA at a time. Coordinated motions by a converter formed by DNA-disengaged RuvB subunits stimulates ATP hydrolysis and nucleotide exchange. Immobilization of the converter enables RuvB to convert the ATP-contained energy into a lever motion, pulling 2 nucleotides of DNA out of the RuvA tetramer per ATP hydrolyzed, thus driving DNA branch migration. The RuvB motors rotate together with the DNA substrate, which together with the progressing nucleotide cycle form the mechanistic basis for DNA recombination by continuous HJ branch migration. Branch migration allows RuvC to scan DNA until it finds its consensus sequence, where it cleaves and resolves cruciform DNA. The chain is Holliday junction branch migration complex subunit RuvB from Bifidobacterium longum (strain DJO10A).